We begin with the raw amino-acid sequence, 108 residues long: uncharacterized protein (108 aa).

This is an uncharacterized protein from Archaeoglobus fulgidus (strain ATCC 49558 / DSM 4304 / JCM 9628 / NBRC 100126 / VC-16).